The chain runs to 472 residues: Glutamate--tRNA ligase 2 (472 aa).

Positions 10-20 match the 'HIGH' region motif; the sequence is PSPTGYLHIGG. Residues Cys-99, Cys-101, Cys-126, and Asp-128 each contribute to the Zn(2+) site. Residues 112-130 show a composition bias toward basic and acidic residues; the sequence is EQQARKEKPRYDGRCRDLD. A disordered region spans residues 112–137; that stretch reads EQQARKEKPRYDGRCRDLDGPPSEEV. A 'KMSKS' region motif is present at residues 240–244; sequence RLSKR. Residue Lys-243 participates in ATP binding.

This sequence belongs to the class-I aminoacyl-tRNA synthetase family. Glutamate--tRNA ligase type 1 subfamily. Monomer. Zn(2+) is required as a cofactor.

Its subcellular location is the cytoplasm. The enzyme catalyses tRNA(Glu) + L-glutamate + ATP = L-glutamyl-tRNA(Glu) + AMP + diphosphate. Its function is as follows. Catalyzes the attachment of glutamate to tRNA(Glu) in a two-step reaction: glutamate is first activated by ATP to form Glu-AMP and then transferred to the acceptor end of tRNA(Glu). The sequence is that of Glutamate--tRNA ligase 2 from Halorhodospira halophila (strain DSM 244 / SL1) (Ectothiorhodospira halophila (strain DSM 244 / SL1)).